Reading from the N-terminus, the 311-residue chain is Aspartate carbamoyltransferase catalytic subunit (311 aa).

Carbamoyl phosphate is bound by residues Arg55 and Thr56. Lys85 lines the L-aspartate pocket. Carbamoyl phosphate-binding residues include Arg106, His134, and Gln137. Residues Arg167 and Arg228 each coordinate L-aspartate. Residues Leu266 and Pro267 each coordinate carbamoyl phosphate.

This sequence belongs to the aspartate/ornithine carbamoyltransferase superfamily. ATCase family. As to quaternary structure, heterododecamer (2C3:3R2) of six catalytic PyrB chains organized as two trimers (C3), and six regulatory PyrI chains organized as three dimers (R2).

The enzyme catalyses carbamoyl phosphate + L-aspartate = N-carbamoyl-L-aspartate + phosphate + H(+). It functions in the pathway pyrimidine metabolism; UMP biosynthesis via de novo pathway; (S)-dihydroorotate from bicarbonate: step 2/3. Catalyzes the condensation of carbamoyl phosphate and aspartate to form carbamoyl aspartate and inorganic phosphate, the committed step in the de novo pyrimidine nucleotide biosynthesis pathway. This is Aspartate carbamoyltransferase catalytic subunit from Psychromonas ingrahamii (strain DSM 17664 / CCUG 51855 / 37).